We begin with the raw amino-acid sequence, 106 residues long: Large ribosomal subunit protein bL21 (106 aa).

It belongs to the bacterial ribosomal protein bL21 family. Part of the 50S ribosomal subunit. Contacts protein L20.

Its function is as follows. This protein binds to 23S rRNA in the presence of protein L20. This chain is Large ribosomal subunit protein bL21, found in Streptomyces griseus subsp. griseus (strain JCM 4626 / CBS 651.72 / NBRC 13350 / KCC S-0626 / ISP 5235).